The primary structure comprises 291 residues: Isopentenyl-diphosphate Delta-isomerase I, chloroplastic (291 aa).

A chloroplast-targeting transit peptide spans 1–52; it reads MSTASLFSFPSFHLRSLLPSLSSSSSSSSSRFAPPRLSPIRSPAPRTQLSVR. An N-acetylthreonine modification is found at S2. The segment covering 20-39 has biased composition (low complexity); sequence SLSSSSSSSSSRFAPPRLSP. Residues 20-43 are disordered; that stretch reads SLSSSSSSSSSRFAPPRLSPIRSP. K95 contacts substrate. Residues H99 and H111 each coordinate Mg(2+). A Nudix hydrolase domain is found at 109–261; sequence LLHRAFSVFL…AVKLSPWFRL (153 aa). R130 and K134 together coordinate substrate. The active site involves C146. S147 provides a ligand contact to substrate. A Nudix box motif is present at residues 147-177; it reads SHPLYRESELIEENVLGVRNAAQRKLFDELG. 2 residues coordinate Mg(2+): E206 and E208. Residue E208 is part of the active site.

The protein belongs to the IPP isomerase type 1 family. The cofactor is Mg(2+).

It is found in the plastid. The protein localises to the chloroplast. The protein resides in the cytoplasm. The enzyme catalyses isopentenyl diphosphate = dimethylallyl diphosphate. The protein operates within isoprenoid biosynthesis; dimethylallyl diphosphate biosynthesis; dimethylallyl diphosphate from isopentenyl diphosphate: step 1/1. It participates in porphyrin-containing compound metabolism; chlorophyll biosynthesis. In terms of biological role, catalyzes the 1,3-allylic rearrangement of the homoallylic substrate isopentenyl (IPP) to its highly electrophilic allylic isomer, dimethylallyl diphosphate (DMAPP). The polypeptide is Isopentenyl-diphosphate Delta-isomerase I, chloroplastic (IPP1) (Arabidopsis thaliana (Mouse-ear cress)).